Consider the following 1863-residue polypeptide: MDLSAVRVEEVQNVINAMQKILECPICLELIKEPVSTKCDHIFCRFCMLKLLNQKKGPSQCPLCKNDITKRSLQESTRFSQLVEELLKIIHAFQLDTGLQFANSYNFAKKENHSPEHLKDEVSIIQSMGYRNRAKRLLQSEPENPSLQETSLSVPLSNLGIVRTLRTKQQIQPQKKSVYIELGSDSSEDTVNKATYCSVGDQELLQITPQGTRDETSLDSAKKAACEFSEKDITNTEHHQSSNNDLNTTEKHATERHPEKYQGSSVSNLHVEPCGTNTHASSLQHENSLLLTKDRMNVEKAEFCNKSKQPGLARSQHNRWTGSKETCNDRQTPSTEKKVDLNANALYERKEWNKQKLPCSENPRDAEDVPWITLNSSIQKVNEWFSRSDELLSSDDSHDGGSESNAKVADVLDVLNEVDEYSGSSEKIDLLASDPHEPLICKSERVHSSSVESNIKDKIFGKTYRRKANLPNLSHVTENLIIGALVTESQIMQERPLTNKLKRKRRTTSGLHPEDFIKKADLAVQKTPEIINQGTNQMEQNGQVMNITNSAHENKTKGDSIQNEKNPNAIESLEEESAFKTKAEPISSSINNMELELNIHNSKAPKKNRLRRKSSTRHIHALELVVSRNLSPPNCTELQIDSCSSSEEIKKKNYNQMPVRHSRNLQLMEDKESATGAKKSNKPNEQTSKRHASDTFPELKLTKVPGSFTNCSNTSELKEFVNPSLSREEKEEKLETVKVSNNAKDPKDLMLSGERVLQTERSVESSSISLVPDTDYGTQESISLLEVSTLGKAKTERNKCMSQCAAFENPKELIHGCSEDTRNDTEGFKYPLGSEVNHSQETSIEIEESELDTQYLQNTFKVSKRQSFALFSNPGNPEEECATFSAHSRSLKKQSPKVTSECEQKEENQGKKESNIKPVQTVNITAGFSVVCQKDKPVDNAKCSIKGGSRFCLSSQFRGNETGLITPNKHGLLQNPYHIPPLFPVKSFVKTKCNKNLLEENSEEHSVSPERAVGNENIIPSTVSTISHNNIRENAFKEASSSNINEVGSSTNEVGSSINEVGPSDENIQAELGRNRGPKLNAVLRLGLLQPEVCKQSLPISNCKHPEIKKQEHEELVQTVNTDFSPCLISDNLEQPMGSSHASEVCSETPDDLLDDGEIKEDTSFAANDIKESSAVFSKSIQRGELSRSPSPFTHTHLAQGYQKEAKKLESSEENLSSEDEELPCFQHLLFGKVSNIPSQTTRHSTVATECLSKNTEENLLSLKNSLTDCSNQVILAKASQEHHLSEETKCSGSLFSSQCSELEDLTANTNTQDPFLIGSSKRMRHQSESQGVGLSDKELVSDDEERGTGLEEDNQEEQSVDSNLGEAASGYESETSVSEDCSRLSSQSEILTTQQRDTMQDNLIKLQQEMAELEAVLEQHGSQPSNSYPSIITDSSALEDLRNPEQSTSEKAVLTSQKSSEYPINQNPEGLSADKFEVSADSSTSKNKEPGVERSSPSKCQSLEDRWYVHSSSGSLQNGNYPSQEELIKVVDVETQQLEKSGPHDLMEPSYLPRQDLDGTPYLESGISLFSDDPESDPSEDRAPESAHVGSIPSSTSALKVPQWQVAESAQSPAAAHNTNTAGYNAMEESVSRENPKLTASTERVNKRMSLVVSGLTPEEFMLVYKFARRYHIALTNLISEETTHVVMKTDAEFVCERTLKYFLGIAGGKWVVSYFWVTQSIKERKMLNEHDFEVRGDVVNGRNHQGPKRARESPDRKIFRGLEICCYGPFTNMPTDQLEWMVQLCGASVVKELSSFTLGTGFHPIVVVQPDAWTEDNGFHAIGQMCEAPVVTREWVLDSVALYQCQELDTYLIPQIPHSHY.

At Met1 the chain carries N-acetylmethionine. Residues 24 to 65 (CPICLELIKEPVSTKCDHIFCRFCMLKLLNQKKGPSQCPLCK) form an RING-type zinc finger. Residue Lys109 forms a Glycyl lysine isopeptide (Lys-Gly) (interchain with G-Cter in SUMO2) linkage. Ser114 bears the Phosphoserine mark. Composition is skewed to basic and acidic residues over residues 231–240 (KDITNTEHHQ) and 248–260 (TTEK…HPEK). The interval 231-266 (KDITNTEHHQSSNNDLNTTEKHATERHPEKYQGSSV) is disordered. Residue Lys300 forms a Glycyl lysine isopeptide (Lys-Gly) (interchain with G-Cter in SUMO2) linkage. The interval 305-336 (NKSKQPGLARSQHNRWTGSKETCNDRQTPSTE) is disordered. The segment covering 318–334 (NRWTGSKETCNDRQTPS) has biased composition (polar residues). Lys338 participates in a covalent cross-link: Glycyl lysine isopeptide (Lys-Gly) (interchain with G-Cter in SUMO2). Residues Ser394, Ser397, Ser422, and Ser433 each carry the phosphoserine modification. Residues Lys442, Lys458, and Lys518 each participate in a glycyl lysine isopeptide (Lys-Gly) (interchain with G-Cter in SUMO2) cross-link. At Ser550 the chain carries Phosphoserine. Lys582 is covalently cross-linked (Glycyl lysine isopeptide (Lys-Gly) (interchain with G-Cter in SUMO2)). A disordered region spans residues 653-699 (NYNQMPVRHSRNLQLMEDKESATGAKKSNKPNEQTSKRHASDTFPEL). Phosphoserine is present on residues Ser693, Ser707, and Ser724. Residues Lys733 and Lys738 each participate in a glycyl lysine isopeptide (Lys-Gly) (interchain with G-Cter in SUMO2) cross-link. A phosphoserine mark is found at Ser752 and Ser839. Positions 886-914 (AHSRSLKKQSPKVTSECEQKEENQGKKES) are disordered. Residues 900-914 (SECEQKEENQGKKES) are compositionally biased toward basic and acidic residues. Glycyl lysine isopeptide (Lys-Gly) (interchain with G-Cter in SUMO2) cross-links involve residues Lys917 and Lys986. Ser987 bears the Phosphoserine; by CHEK2 mark. Ser1008 bears the Phosphoserine mark. Positions 1042–1059 (SNINEVGSSTNEVGSSIN) are enriched in polar residues. The segment at 1042 to 1062 (SNINEVGSSTNEVGSSINEVG) is disordered. Lys1079 is covalently cross-linked (Glycyl lysine isopeptide (Lys-Gly) (interchain with G-Cter in SUMO2)). 11 positions are modified to phosphoserine: Ser1143, Ser1189, Ser1191, Ser1211, Ser1217, Ser1218, Ser1280, Ser1328, Ser1336, Ser1342, and Ser1387. Positions 1323 to 1397 (RMRHQSESQG…QSEILTTQQR (75 aa)) are disordered. Positions 1342–1360 (SDDEERGTGLEEDNQEEQS) are enriched in acidic residues. Residues 1373 to 1397 (ESETSVSEDCSRLSSQSEILTTQQR) show a composition bias toward polar residues. Thr1394 carries the phosphothreonine modification. The tract at residues 1397 to 1424 (RDTMQDNLIKLQQEMAELEAVLEQHGSQ) is interaction with PALB2. A phosphoserine mark is found at Ser1423, Ser1457, Ser1524, and Ser1542. Positions 1442-1501 (LRNPEQSTSEKAVLTSQKSSEYPINQNPEGLSADKFEVSADSSTSKNKEPGVERSSPSKC) are disordered. Polar residues predominate over residues 1445–1470 (PEQSTSEKAVLTSQKSSEYPINQNPE). The interval 1540 to 1618 (EKSGPHDLME…ESAQSPAAAH (79 aa)) is disordered. A compositionally biased stretch (polar residues) spans 1607–1618 (VAESAQSPAAAH). BRCT domains follow at residues 1642 to 1736 (STER…DFEV) and 1756 to 1855 (PDRK…TYLI).

Heterodimer with BARD1. Part of the BRCA1-associated genome surveillance complex (BASC), which contains BRCA1, MSH2, MSH6, MLH1, ATM, BLM, PMS2 and the MRE11-RAD50-NBN protein (MRN) complex. This association could be a dynamic process changing throughout the cell cycle and within subnuclear domains. Component of the BRCA1-A complex, at least composed of BRCA1, BARD1, UIMC1/RAP80, ABRAXAS1, BRCC3/BRCC36, BABAM2 and BABAM1/NBA1. Interacts (via the BRCT domains) with ABRAXAS1 (phosphorylated form); this is important for recruitment to sites of DNA damage. Can form a heterotetramer with two molecules of ABRAXAS1 (phosphorylated form). Component of the BRCA1-RBBP8 complex. Interacts (via the BRCT domains) with RBBP8 ('Ser-327' phosphorylated form); the interaction ubiquitinates RBBP8, regulates CHEK1 activation, and involves RBBP8 in BRCA1-dependent G2/M checkpoint control on DNA damage. Associates with RNA polymerase II holoenzyme. Interacts with SMC1A, NELFB, DCLRE1C, CLSPN. CHEK1, CHEK2, BAP1, BRCC3, UBXN1 and PCLAF. Interacts (via BRCT domains) with BRIP1 (phosphorylated form). Interacts with FANCD2 (ubiquitinated form). Interacts with H2AX (phosphorylated on 'Ser-140'). Interacts (via the BRCT domains) with ACACA (phosphorylated form); the interaction prevents dephosphorylation of ACACA. Part of a BRCA complex containing BRCA1, BRCA2 and PALB2. Interacts directly with PALB2; the interaction is essential for its function in HRR. Interacts directly with BRCA2; the interaction occurs only in the presence of PALB2 which serves as the bridging protein. Interacts (via the BRCT domains) with LMO4; the interaction represses the transcriptional activity of BRCA1. Interacts (via the BRCT domains) with CCAR2 (via N-terminus); the interaction represses the transcriptional activator activity of BRCA1. Interacts with EXD2. Interacts (via C-terminus) with DHX9; this interaction is direct and links BRCA1 to the RNA polymerase II holoenzyme. Interacts with DNA helicase ZGRF1; the interaction is increased following DNA damage induction. In terms of processing, phosphorylated in response to IR, UV, and various stimuli that cause checkpoint activation, probably by ATM or ATR. Phosphorylation at Ser-987 by CHEK2 regulates mitotic spindle assembly. Phosphorylation by AURKA regulates centrosomal microtubule nucleation. Autoubiquitinated, undergoes 'Lys-6'-linked polyubiquitination. 'Lys-6'-linked polyubiquitination does not promote degradation.

The protein resides in the nucleus. It is found in the chromosome. The protein localises to the cytoplasm. It catalyses the reaction S-ubiquitinyl-[E2 ubiquitin-conjugating enzyme]-L-cysteine + [acceptor protein]-L-lysine = [E2 ubiquitin-conjugating enzyme]-L-cysteine + N(6)-ubiquitinyl-[acceptor protein]-L-lysine.. It functions in the pathway protein modification; protein ubiquitination. E3 ubiquitin-protein ligase that specifically mediates the formation of 'Lys-6'-linked polyubiquitin chains and plays a central role in DNA repair by facilitating cellular responses to DNA damage. It is unclear whether it also mediates the formation of other types of polyubiquitin chains. The BRCA1-BARD1 heterodimer coordinates a diverse range of cellular pathways such as DNA damage repair, ubiquitination and transcriptional regulation to maintain genomic stability. Regulates centrosomal microtubule nucleation. Required for appropriate cell cycle arrests after ionizing irradiation in both the S-phase and the G2 phase of the cell cycle. Required for FANCD2 targeting to sites of DNA damage. Inhibits lipid synthesis by binding to inactive phosphorylated ACACA and preventing its dephosphorylation. Contributes to homologous recombination repair (HRR) via its direct interaction with PALB2, fine-tunes recombinational repair partly through its modulatory role in the PALB2-dependent loading of BRCA2-RAD51 repair machinery at DNA breaks. Component of the BRCA1-RBBP8 complex which regulates CHEK1 activation and controls cell cycle G2/M checkpoints on DNA damage via BRCA1-mediated ubiquitination of RBBP8. Acts as a transcriptional activator. The protein is Breast cancer type 1 susceptibility protein homolog (BRCA1) of Macaca mulatta (Rhesus macaque).